A 79-amino-acid chain; its full sequence is Acyl carrier protein (79 aa).

The region spanning 2–77 is the Carrier domain; the sequence is SDIEARVKKI…LAIDYAKNNV (76 aa). Ser-37 bears the O-(pantetheine 4'-phosphoryl)serine mark.

The protein belongs to the acyl carrier protein (ACP) family. 4'-phosphopantetheine is transferred from CoA to a specific serine of apo-ACP by AcpS. This modification is essential for activity because fatty acids are bound in thioester linkage to the sulfhydryl of the prosthetic group.

Its subcellular location is the cytoplasm. Its pathway is lipid metabolism; fatty acid biosynthesis. Carrier of the growing fatty acid chain in fatty acid biosynthesis. The protein is Acyl carrier protein of Leptothrix cholodnii (strain ATCC 51168 / LMG 8142 / SP-6) (Leptothrix discophora (strain SP-6)).